Reading from the N-terminus, the 480-residue chain is Gamma-aminobutyric acid receptor subunit rho-1 (480 aa).

Positions 1–21 are cleaved as a signal peptide; it reads MLAVQNMKFGIFLLWWGWVLA. The Extracellular segment spans residues 22 to 281; that stretch reads AESTAHWPGR…LYINFTLRRH (260 aa). Over residues 29–38 the composition is skewed to basic and acidic residues; the sequence is PGREVHEPSR. Residues 29-67 are disordered; it reads PGREVHEPSRKGSRPQRQRRGAHDDAHKQGSPILRRSSD. Basic residues predominate over residues 39–48; that stretch reads KGSRPQRQRR. Arginine 126 is a 4-aminobutanoate binding site. Asparagine 141 carries N-linked (GlcNAc...) asparagine glycosylation. Serine 190 contributes to the 4-aminobutanoate binding site. Cysteine 199 and cysteine 213 are joined by a disulfide. A 4-aminobutanoate-binding site is contributed by glutamate 218. 2 N-linked (GlcNAc...) asparagine glycosylation sites follow: asparagine 235 and asparagine 275. The helical transmembrane segment at 282 to 302 threads the bilayer; the sequence is IFFFLLQTYFPATLMVMLSWV. Residues 303 to 314 lie on the Cytoplasmic side of the membrane; the sequence is SFWIDRRAVPAR. The helical transmembrane segment at 315 to 335 threads the bilayer; the sequence is VPLGITTVLTMSTIITGVNAS. The Extracellular portion of the chain corresponds to 336–346; it reads MPRVSYIKAVD. A helical transmembrane segment spans residues 347–367; the sequence is IYLWVSFVFVFLSVLEYAAVN. Over 368-458 the chain is Cytoplasmic; the sequence is YLTTVQERKE…MRINTHAIDK (91 aa). Residues 459–479 form a helical membrane-spanning segment; sequence YSRIIFPAAYILFNLIYWSIF. A topological domain (extracellular) is located at residue serine 480.

Belongs to the ligand-gated ion channel (TC 1.A.9) family. Gamma-aminobutyric acid receptor (TC 1.A.9.5) subfamily. GABRR1 sub-subfamily. Three rho subunits (rho-1/GBRR1, rho-2/GBRR2 and rho-3/GBRR3) coassemble either to form functional homopentamers or heteropentamers. Rho-1/GBRR1 subunits can also associate with alpha-1/GBRA1 subunits to form a functional GABAAR. Interacts with SQSTM1. In terms of tissue distribution, expressed in the cerebellum.

Its subcellular location is the postsynaptic cell membrane. It localises to the cell membrane. The enzyme catalyses chloride(in) = chloride(out). Its activity is regulated as follows. Inhibited by TPMPA, a rho-specific antagonist, when forming a homopentamer. In contrast with other GABAARs, rho-1 GABAAR is not inhibited by bicuculline when forming a homopentamer. In terms of biological role, rho subunit of the pentameric ligand-gated chloride channels responsible for mediating the effects of gamma-aminobutyric acid (GABA), the major inhibitory neurotransmitter in the brain. Rho-containing GABA-gated chloride channels are a subclass of GABA(A) receptors (GABAARs) entirely composed of rho subunits, where GABA molecules bind at the rho intersubunit interfaces. When activated by GABA, rho-GABAARs selectively allow the flow of chloride anions across the cell membrane down their electrochemical gradient. Rho-1 subunits are primarily expressed in retina where rho-1-containing GABAARs play a role in retinal neurotransmission. Rho-1 GABAARs are also involved in neuronal tonic (extrasynaptic) and phasic (synaptic) transmission in the Purkinje neurons of the cerebellum. Rho-1 GABAARs may also contribute to the regulation of glial development in the cerebellum by controlling extrasynaptic transmission. The polypeptide is Gamma-aminobutyric acid receptor subunit rho-1 (Mus musculus (Mouse)).